We begin with the raw amino-acid sequence, 363 residues long: UDP-3-O-acylglucosamine N-acyltransferase (363 aa).

The active-site Proton acceptor is the H266.

The protein belongs to the transferase hexapeptide repeat family. LpxD subfamily. As to quaternary structure, homotrimer.

The catalysed reaction is a UDP-3-O-[(3R)-3-hydroxyacyl]-alpha-D-glucosamine + a (3R)-hydroxyacyl-[ACP] = a UDP-2-N,3-O-bis[(3R)-3-hydroxyacyl]-alpha-D-glucosamine + holo-[ACP] + H(+). The protein operates within bacterial outer membrane biogenesis; LPS lipid A biosynthesis. Functionally, catalyzes the N-acylation of UDP-3-O-acylglucosamine using 3-hydroxyacyl-ACP as the acyl donor. Is involved in the biosynthesis of lipid A, a phosphorylated glycolipid that anchors the lipopolysaccharide to the outer membrane of the cell. The polypeptide is UDP-3-O-acylglucosamine N-acyltransferase (Bordetella pertussis (strain Tohama I / ATCC BAA-589 / NCTC 13251)).